The following is a 445-amino-acid chain: MAERKYFGTDGVRGLVGQAPITPDFVMKLGWAAGQVLAKQGTKKVIIGKDTRISGYMLESALEAGLAAAGLQAKFTGPMPTPAVAYLTQTFRAEAGIVISASHNPYYDNGIKFFSSEGTKLPDDVEMAIEAELDKPMTCVESALLGKASRLNDAAGRYIEFCKSTFPKELSLAGLKIVIDCANGATYHIAPNVFKELGAEIITIGCEPNGTNINHEVGATDVRALQAKVVEEKADFGVAFDGDGDRIIMVDEFGEKVDGDQIAYIIARDALRRGELKGGVVGTLMTNMGMEVALRNLGIPFVRSDVGDRYVMEKLLENNWLIGAENSGHVILLDKVTTGDAIVAALQVIASIVGSKMSLKELCDGMTMFPQILVNVRFAGENDPLESDAVKAAQADVEAKLGDNGRVLLRKSGTEPLIRVMVEGEDAELVTQYAQQIADAVKESC.

Ser102 acts as the Phosphoserine intermediate in catalysis. Mg(2+) is bound by residues Ser102, Asp241, Asp243, and Asp245. Ser102 carries the phosphoserine modification.

Belongs to the phosphohexose mutase family. Requires Mg(2+) as cofactor. Post-translationally, activated by phosphorylation.

It carries out the reaction alpha-D-glucosamine 1-phosphate = D-glucosamine 6-phosphate. Its function is as follows. Catalyzes the conversion of glucosamine-6-phosphate to glucosamine-1-phosphate. This chain is Phosphoglucosamine mutase, found in Aliivibrio fischeri (strain ATCC 700601 / ES114) (Vibrio fischeri).